A 153-amino-acid polypeptide reads, in one-letter code: Large ribosomal subunit protein uL22 (153 aa).

The protein belongs to the universal ribosomal protein uL22 family. As to quaternary structure, part of the 50S ribosomal subunit.

Its function is as follows. This protein binds specifically to 23S rRNA. It makes multiple contacts with different domains of the 23S rRNA in the assembled 50S subunit and ribosome. Functionally, the globular domain of the protein is located near the polypeptide exit tunnel on the outside of the subunit, while an extended beta-hairpin is found that lines the wall of the exit tunnel in the center of the 70S ribosome. The polypeptide is Large ribosomal subunit protein uL22 (Methanoculleus marisnigri (strain ATCC 35101 / DSM 1498 / JR1)).